The chain runs to 409 residues: Bone morphogenetic protein 4 (409 aa).

The first 24 residues, 1-24 (MIPGNRMLMVVLLCQVLLGGASHA), serve as a signal peptide directing secretion. Positions 25–293 (SLIPETGKKK…ALTRRRRAKR (269 aa)) are excised as a propeptide. Residue Ser91 is modified to Phosphoserine. Residues Asn144 and Asn209 are each glycosylated (N-linked (GlcNAc...) asparagine). The disordered stretch occupies residues 284-308 (ALTRRRRAKRSPKHHPQRARKKNKN). 3 disulfides stabilise this stretch: Cys309/Cys374, Cys338/Cys406, and Cys342/Cys408. Asn351 and Asn366 each carry an N-linked (GlcNAc...) asparagine glycan.

Belongs to the TGF-beta family. Homodimer; disulfide-linked. Interacts with GREM2. Part of a complex consisting of TWSG1 and CHRD. Interacts with the serine proteases, HTRA1 and HTRA3; the interaction with either inhibits BMP4-mediated signaling. The HTRA protease activity is required for this inhibition. Interacts with SOSTDC1. Interacts with FBN1 (via N-terminal domain) and FBN2. Interacts with type I receptor BMPR1A. Interacts with type II receptor BMPR2. Interacts with FSTL1; this interaction inhibits the activation of the BMP4/Smad1/5/8 signaling pathway. Interacts with SCUBE3. Interacts with TGFBR3.

It is found in the secreted. Its subcellular location is the extracellular space. The protein localises to the extracellular matrix. Functionally, growth factor of the TGF-beta superfamily that plays essential roles in many developmental processes, including neurogenesis, vascular development, angiogenesis and osteogenesis. Acts in concert with PTHLH/PTHRP to stimulate ductal outgrowth during embryonic mammary development and to inhibit hair follicle induction. Initiates the canonical BMP signaling cascade by associating with type I receptor BMPR1A and type II receptor BMPR2. Once all three components are bound together in a complex at the cell surface, BMPR2 phosphorylates and activates BMPR1A. In turn, BMPR1A propagates signal by phosphorylating SMAD1/5/8 that travel to the nucleus and act as activators and repressors of transcription of target genes. Positively regulates the expression of odontogenic development regulator MSX1 via inducing the IPO7-mediated import of SMAD1 to the nucleus. Required for MSX1-mediated mesenchymal molar tooth bud development beyond the bud stage, via promoting Wnt signaling. Acts as a positive regulator of odontoblast differentiation during mesenchymal tooth germ formation, expression is repressed during the bell stage by MSX1-mediated inhibition of CTNNB1 signaling. Able to induce its own expression in dental mesenchymal cells and also in the neighboring dental epithelial cells via an MSX1-mediated pathway. Can also signal through non-canonical BMP pathways such as ERK/MAP kinase, PI3K/Akt, or SRC cascades. For example, induces SRC phosphorylation which, in turn, activates VEGFR2, leading to an angiogenic response. The protein is Bone morphogenetic protein 4 of Bos taurus (Bovine).